We begin with the raw amino-acid sequence, 129 residues long: LEM domain-containing protein 1 (129 aa).

One can recognise an LEM domain in the interval 1–45 (MVDVKCLSDYELHKHLMKLGFTPGPILPSTRKTYEKKLVQLLASP). A disordered region spans residues 45-129 (PPWKPPVMKR…RAPRTTSHGA (85 aa)). The segment covering 83 to 97 (SLKKTTLDATRDPRA) has biased composition (basic and acidic residues).

This Mus musculus (Mouse) protein is LEM domain-containing protein 1 (Lemd1).